Here is a 1423-residue protein sequence, read N- to C-terminus: MEGTSFHQASNSMRRNSSVWKKDSGREIFSRSSREEDDEEALRWAALEKLPTFDRLRKGILTASHAGGPINEIDIQKLGFQDTKKLLERLIKVGDDEHEKLLWKLKKRIDRVGIDLPTIEVRFDHLKVEAEVHVGGRALPTFVNFISNFADKFLNTLHLVPNRKKKFTILNDVSGIVKPGRMALLLGPPSSGKTTLLLALAGKLDQELKQTGRVTYNGHGMNEFVPQRTAAYIGQNDVHIGEMTVRETFAYAARFQGVGSRYDMLTELARREKEANIKPDPDIDIFMKAMSTAGEKTNVMTDYILKILGLEVCADTMVGDDMLRGISGGQKKRVTTGEMLVGPSRALFMDEISTGLDSSTTYQIVNSLRNYVHIFNGTALISLLQPAPETFNLFDDIILIAEGEIIYEGPRDHVVEFFETMGFKCPPRKGVADFLQEVTSKKDQMQYWARRDEPYRFIRVREFAEAFQSFHVGRRIGDELALPFDKTKSHPAALTTKKYGVGIKELVKTSFSREYLLMKRNSFVYYFKFGQLLVMAFLTMTLFFRTEMQKKTEVDGSLYTGALFFILMMLMFNGMSELSMTIAKLPVFYKQRDLLFYPAWVYSLPPWLLKIPISFMEAALTTFITYYVIGFDPNVGRLFKQYILLVLMNQMASALFKMVAALGRNMIVANTFGAFAMLVFFALGGVVLSRDDIKKWWIWGYWISPIMYGQNAILANEFFGHSWSRAVENSSETLGVTFLKSRGFLPHAYWYWIGTGALLGFVVLFNFGFTLALTFLNSLGKPQAVIAEEPASDETELQSARSEGVVEAGANKKRGMVLPFEPHSITFDNVVYSVDMPQEMIEQGTQEDRLVLLKGVNGAFRPGVLTALMGVSGAGKTTLMDVLAGRKTGGYIDGNITISGYPKNQQTFARISGYCEQTDIHSPHVTVYESLVYSAWLRLPKEVDKNKRKIFIEEVMELVELTPLRQALVGLPGESGLSTEQRKRLTIAVELVANPSIIFMDEPTSGLDARAAAIVMRTVRNTVDTGRTVVCTIHQPSIDIFEAFDELFLLKRGGEEIYVGPLGHESTHLINYFESIQGINKITEGYNPATWMLEVSTTSQEAALGVDFAQVYKNSELYKRNKELIKELSQPAPGSKDLYFPTQYSQSFLTQCMASLWKQHWSYWRNPPYTAVRFLFTIGIALMFGTMFWDLGGKTKTRQDLSNAMGSMYTAVLFLGLQNAASVQPVVNVERTVFYREQAAGMYSAMPYAFAQVFIEIPYVLVQAIVYGLIVYAMIGFEWTAVKFFWYLFFMYGSFLTFTFYGMMAVAMTPNHHIASVVSSAFYGIWNLFSGFLIPRPSMPVWWEWYYWLCPVAWTLYGLIASQFGDITEPMADSNMSVKQFIREFYGYREGFLGVVAAMNVIFPLLFAVIFAIGIKSFNFQKR.

The segment covering methionine 1–valine 19 has biased composition (polar residues). The tract at residues methionine 1–glutamate 36 is disordered. Asparagine 16 carries an N-linked (GlcNAc...) asparagine glycan. The segment covering tryptophan 20–arginine 34 has biased composition (basic and acidic residues). The 274-residue stretch at leucine 154–proline 427 folds into the ABC transporter 1 domain. Glycine 187–threonine 194 is an ATP binding site. The N-linked (GlcNAc...) asparagine glycan is linked to asparagine 376. The ABC transmembrane type-2 1 domain occupies glutamate 505 to phenylalanine 718. A run of 6 helical transmembrane segments spans residues phenylalanine 523–phenylalanine 543, alanine 562–isoleucine 582, isoleucine 611–phenylalanine 631, isoleucine 643–glycine 663, isoleucine 667–valine 687, and tryptophan 696–asparagine 716. N-linked (GlcNAc...) asparagine glycosylation occurs at asparagine 729. Residues glycine 756–leucine 776 form a helical membrane-spanning segment. The ABC transporter 2 domain maps to isoleucine 825–glutamine 1077. Glycine 870–threonine 877 provides a ligand contact to ATP. Asparagine 895 carries an N-linked (GlcNAc...) asparagine glycan. A Phosphothreonine modification is found at threonine 962. An ABC transmembrane type-2 2 domain is found at threonine 1150–phenylalanine 1364. The next 6 membrane-spanning stretches (helical) occupy residues phenylalanine 1174–lysine 1194, serine 1207–valine 1227, isoleucine 1257–phenylalanine 1277, phenylalanine 1284–methionine 1304, isoleucine 1314–isoleucine 1334, and valine 1341–alanine 1361. Asparagine 1375 carries N-linked (GlcNAc...) asparagine glycosylation. The helical transmembrane segment at valine 1395–isoleucine 1415 threads the bilayer.

The protein belongs to the ABC transporter superfamily. ABCG family. PDR (TC 3.A.1.205) subfamily. As to quaternary structure, interacts with LECRK91 and LECRK92. In terms of tissue distribution, mostly observed in inflorescence meristems relative to cauline leaves and developing siliques. Ubiquitous with higher levels in leaves, stems and flowers. Also present in primary and lateral roots. In seeds, mainly expressed in the embryo and, to a lesser extent, in the endosperm.

Its subcellular location is the cell membrane. The enzyme catalyses abscisate(out) + ATP + H2O = abscisate(in) + ADP + phosphate + H(+). Its activity is regulated as follows. Inhibited by glibenclamide, verapamil and vanadate (ABC transporters inhibitors). Its function is as follows. High affinity abscisic acid (ABA) transporter that mediates the import of ABA, with a preference for (+)-ABA, through the plasma membrane, especially in guard cells, and is involved in the intercellular and intracellular ABA signaling pathways leading, for example, to stomatal closure, thus conferring drought tolerance. Together with ABCG30, import into the embryo the ABA delivered from the endosperm via ABCG25 and ABCG31-mediated export to suppress radicle extension and subsequent embryonic growth. May be a general defense protein. Functions as a pump to exclude Pb(2+) ions and/or Pb(2+)-containing toxic compounds from the cytoplasm. Contributes to Pb(2+) ions resistance. Confers some resistance to the terpene sclareol. (Microbial infection) Involved in resistance response to the pathogenic oomycetes Phytophthora infestans and Phytophthora capsici. This chain is ABC transporter G family member 40, found in Arabidopsis thaliana (Mouse-ear cress).